Reading from the N-terminus, the 255-residue chain is MNRREVRCAFSASKAARAQLLLRGKVRLEPLPTRPRTVLGLDASYSAKDGVGVGAAVLISLETLEPVDCRVYISRVCIPYIPGLLAFRELAVMAPAAAALSAEADVVMVDGHGIAHPRRFGIASHVGVILERPSIGVAKKKLVGTLVEGPGGMYVVQDGERLAIVLGTRPREVYVSPGHRITLEEAASIARATIRPGGWMPEPTRLADVISKALKTIIGGQSLINSALASLCRVKLGPRLEELERPLRRAGLEVE.

Mg(2+) is bound by residues aspartate 42 and aspartate 110.

The protein belongs to the endonuclease V family. Mg(2+) serves as cofactor.

Its subcellular location is the cytoplasm. The catalysed reaction is Endonucleolytic cleavage at apurinic or apyrimidinic sites to products with a 5'-phosphate.. DNA repair enzyme involved in the repair of deaminated bases. Selectively cleaves double-stranded DNA at the second phosphodiester bond 3' to a deoxyinosine leaving behind the intact lesion on the nicked DNA. In Aeropyrum pernix (strain ATCC 700893 / DSM 11879 / JCM 9820 / NBRC 100138 / K1), this protein is Endonuclease V.